The following is a 453-amino-acid chain: Prenyltransferase nscD (453 aa).

Dimethylallyl diphosphate-binding residues include Arg118, Lys200, Tyr202, Lys271, Tyr273, and Tyr428.

Belongs to the tryptophan dimethylallyltransferase family.

It participates in secondary metabolite biosynthesis. In terms of biological role, prenyltransferase; part of the gene cluster that mediates the biosynthesis of neosartoricin, a prenylated anthracenone that exhibits T-cell antiproliferative activity, suggestive of a physiological role as an immunosuppressive agent. The non-reducing polyketide synthase nscA probably synthesizes and cyclizes the decaketide backbone. The hydrolase nscB then mediates the product release through hydrolysis followed by spontaneous decarboxylation. The prenyltransferase nscD catalyzes the addition of the dimethylallyl group to the aromatic C5. The FAD-dependent monooxygenase nscC is then responsible for the stereospecific hydroxylation at C2. There is no gene encoding O-acetyltransferase in the nsc gene cluster; thus, the last step of 2-O-acetylation leading to neosartoricin may be catalyzed by an unidentified O-acetyltransferase. In Aspergillus fumigatus (strain ATCC MYA-4609 / CBS 101355 / FGSC A1100 / Af293) (Neosartorya fumigata), this protein is Prenyltransferase nscD.